A 553-amino-acid polypeptide reads, in one-letter code: Membrane protein insertase YidC (553 aa).

A helical membrane pass occupies residues L6–F26. Residues N34–P59 are disordered. The segment covering Q38–P59 has biased composition (low complexity). 5 helical membrane-spanning segments follow: residues L331–L351, N360–T380, V424–Y444, I477–Q497, and I512–V532.

This sequence belongs to the OXA1/ALB3/YidC family. Type 1 subfamily. In terms of assembly, interacts with the Sec translocase complex via SecD. Specifically interacts with transmembrane segments of nascent integral membrane proteins during membrane integration.

It localises to the cell inner membrane. In terms of biological role, required for the insertion and/or proper folding and/or complex formation of integral membrane proteins into the membrane. Involved in integration of membrane proteins that insert both dependently and independently of the Sec translocase complex, as well as at least some lipoproteins. Aids folding of multispanning membrane proteins. The polypeptide is Membrane protein insertase YidC (Syntrophobacter fumaroxidans (strain DSM 10017 / MPOB)).